The primary structure comprises 482 residues: Proton extrusion protein PxcA (482 aa).

A run of 4 helical transmembrane segments spans residues 265–285, 359–379, 406–426, and 442–462; these read FVLG…NLVI, PLKN…YFVL, IIIL…WEVI, and FINM…KYWI.

The protein belongs to the CemA family.

It localises to the cell inner membrane. In terms of biological role, required for H(+) efflux immediately after light irradiation to form a rapid H(+) concentration gradient across the thylakoid membranes. Together with PxcL, contributes to transient H(+) uptake following dark to light transition. This chain is Proton extrusion protein PxcA, found in Acaryochloris marina (strain MBIC 11017).